A 220-amino-acid polypeptide reads, in one-letter code: UPF0502 protein PSPPH_2577 (220 aa).

It belongs to the UPF0502 family.

The polypeptide is UPF0502 protein PSPPH_2577 (Pseudomonas savastanoi pv. phaseolicola (strain 1448A / Race 6) (Pseudomonas syringae pv. phaseolicola (strain 1448A / Race 6))).